Consider the following 468-residue polypeptide: Glycine--tRNA ligase (468 aa).

Residues R101 and E170 each contribute to the substrate site. Residues 202–204, 212–217, 289–290, and 333–336 each bind ATP; these read RNE, FRTREF, EL, and GLTR. 217–221 lines the substrate pocket; the sequence is FEQME. 329-333 provides a ligand contact to substrate; the sequence is EPAAG.

This sequence belongs to the class-II aminoacyl-tRNA synthetase family. In terms of assembly, homodimer.

The protein resides in the cytoplasm. It catalyses the reaction tRNA(Gly) + glycine + ATP = glycyl-tRNA(Gly) + AMP + diphosphate. Catalyzes the attachment of glycine to tRNA(Gly). The chain is Glycine--tRNA ligase from Mycolicibacterium vanbaalenii (strain DSM 7251 / JCM 13017 / BCRC 16820 / KCTC 9966 / NRRL B-24157 / PYR-1) (Mycobacterium vanbaalenii).